Here is a 261-residue protein sequence, read N- to C-terminus: MAELRLPPNSVVKKGKEHKEQEEMLKPRKVKIYRYDPDLDENPTIDSFEIDLSKTGPMVLDALIKIKNEIDSTLTFRRSCREGICGSCSMNIDGTNTLACIKPIEEISGDIKIYPLPHMKVVKDLVPDMSHFYAQYESIEPWLKTDSPTPSNSERLQSIKGREKLDGLYECILCACCSTSCPSYWWNGDKYLGPAILLQAYRWIADSRDDHTGERLEDLEDPSKLYRCHTIMNCTKTCPKGLNPAKAIGKIKSLIAERHGV.

The disordered stretch occupies residues 1-23; it reads MAELRLPPNSVVKKGKEHKEQEE. One can recognise a 2Fe-2S ferredoxin-type domain in the interval 28 to 119; the sequence is RKVKIYRYDP…DIKIYPLPHM (92 aa). [2Fe-2S] cluster is bound by residues C80, C85, and C100. In terms of domain architecture, 4Fe-4S ferredoxin-type spans 161–191; the sequence is GREKLDGLYECILCACCSTSCPSYWWNGDKY. C171, C174, and C177 together coordinate [4Fe-4S] cluster. A [3Fe-4S] cluster-binding site is contributed by C181. W186 is a binding site for a ubiquinone. [3Fe-4S] cluster is bound by residues C228 and C234. C238 is a binding site for [4Fe-4S] cluster.

The protein belongs to the succinate dehydrogenase/fumarate reductase iron-sulfur protein family. In terms of assembly, part of an enzyme complex containing four subunits: a flavoprotein, an iron-sulfur, cytochrome b-556, and a hydrophobic anchor protein. [2Fe-2S] cluster serves as cofactor. [3Fe-4S] cluster is required as a cofactor. It depends on [4Fe-4S] cluster as a cofactor.

It catalyses the reaction a quinone + succinate = fumarate + a quinol. It participates in carbohydrate metabolism; tricarboxylic acid cycle; fumarate from succinate (bacterial route): step 1/1. This chain is Succinate dehydrogenase iron-sulfur subunit (sdhB), found in Rickettsia felis (strain ATCC VR-1525 / URRWXCal2) (Rickettsia azadi).